The primary structure comprises 132 residues: Small ribosomal subunit protein uS8 (132 aa).

This sequence belongs to the universal ribosomal protein uS8 family. As to quaternary structure, part of the 30S ribosomal subunit. Contacts proteins S5 and S12.

Functionally, one of the primary rRNA binding proteins, it binds directly to 16S rRNA central domain where it helps coordinate assembly of the platform of the 30S subunit. This is Small ribosomal subunit protein uS8 from Paracoccus denitrificans (strain Pd 1222).